A 391-amino-acid polypeptide reads, in one-letter code: Cytochrome P450 165A3 (391 aa).

The interval M1–G22 is disordered. C342 is a binding site for heme.

This sequence belongs to the cytochrome P450 family. Heme serves as cofactor.

The protein operates within antibiotic biosynthesis; vancomycin biosynthesis. In terms of biological role, involved in the coupling of aromatic side chains of the heptapeptide of vancomycin. The chain is Cytochrome P450 165A3 (cyp165A3) from Amycolatopsis orientalis (Nocardia orientalis).